Here is a 138-residue protein sequence, read N- to C-terminus: Abscisic stress-ripening protein 5 (138 aa).

Residues 1-13 (MAEEKHHHHLFHH) show a composition bias toward basic residues. Disordered regions lie at residues 1–27 (MAEEKHHHHLFHHKKDDEPATGVDSYG) and 106–138 (GAGGYAFHEHHEKKKDHKSAEESTGEKKHHLFG).

Belongs to the abscisic acid and water stress-induced protein family.

It is found in the nucleus. It localises to the cytoplasm. Its function is as follows. Involved in tolerance to aluminum. Regulates the expression of different genes that collectively contribute to the protection of the cell in response to aluminum stress. This chain is Abscisic stress-ripening protein 5, found in Oryza sativa subsp. indica (Rice).